A 353-amino-acid chain; its full sequence is Ferrochelatase (353 aa).

Residues 1–13 are compositionally biased toward basic and acidic residues; it reads MTLERTGRDEEKA. Residues 1 to 23 form a disordered region; that stretch reads MTLERTGRDEEKALTQPPSGHSS. 2 residues coordinate Fe cation: H223 and E304.

This sequence belongs to the ferrochelatase family.

It is found in the cytoplasm. The catalysed reaction is heme b + 2 H(+) = protoporphyrin IX + Fe(2+). It functions in the pathway porphyrin-containing compound metabolism; protoheme biosynthesis; protoheme from protoporphyrin-IX: step 1/1. Its function is as follows. Catalyzes the ferrous insertion into protoporphyrin IX. This chain is Ferrochelatase, found in Chelativorans sp. (strain BNC1).